The sequence spans 186 residues: Small ribosomal subunit protein uS7 (186 aa).

It belongs to the universal ribosomal protein uS7 family. In terms of assembly, part of the 30S ribosomal subunit.

Functionally, one of the primary rRNA binding proteins, it binds directly to 16S rRNA where it nucleates assembly of the head domain of the 30S subunit. Is located at the subunit interface close to the decoding center. The sequence is that of Small ribosomal subunit protein uS7 from Methanococcoides burtonii (strain DSM 6242 / NBRC 107633 / OCM 468 / ACE-M).